Consider the following 345-residue polypeptide: Phosphoribosylformylglycinamidine cyclo-ligase (345 aa).

The protein belongs to the AIR synthase family.

It localises to the cytoplasm. It carries out the reaction 2-formamido-N(1)-(5-O-phospho-beta-D-ribosyl)acetamidine + ATP = 5-amino-1-(5-phospho-beta-D-ribosyl)imidazole + ADP + phosphate + H(+). It functions in the pathway purine metabolism; IMP biosynthesis via de novo pathway; 5-amino-1-(5-phospho-D-ribosyl)imidazole from N(2)-formyl-N(1)-(5-phospho-D-ribosyl)glycinamide: step 2/2. The polypeptide is Phosphoribosylformylglycinamidine cyclo-ligase (Myxococcus xanthus (strain DK1622)).